A 200-amino-acid chain; its full sequence is Integrin beta-1-binding protein 1 (200 aa).

The span at 1–10 shows a compositional bias: basic residues; it reads MFRKGKKRHS. Residues 1 to 55 form a disordered region; the sequence is MFRKGKKRHSSSSSQSSEISTKSKSVDSSLGGLSRSSTVASLDTDSTKSSGQSNS. Residues 6-7 carry the Nuclear localization signal motif; sequence KK. The segment covering 11-29 has biased composition (low complexity); the sequence is SSSSQSSEISTKSKSVDSS. Positions 34-55 are enriched in polar residues; it reads SRSSTVASLDTDSTKSSGQSNS. Thr-38 carries the post-translational modification Phosphothreonine; by CaMK2. Ser-41 carries the phosphoserine modification. A PID domain is found at 58 to 200; it reads DTCAEFRIKY…FDSVLTSDKS (143 aa). The interval 136-139 is interaction with KRIT1; it reads YLII. The tract at residues 139–141 is interaction with ITGB1; it reads IRM.

Found in a complex, at least composed of ITGB1BP1, KRIT1 and RAP1A. Interacts (via C-terminal region) with ITGB1 (via C-terminal cytoplasmic tail); the interaction prevents talin TLN1 binding to ITGB1 and KRIT1 and ITGB1 compete for the same binding site. Interacts with KRIT1 (via N-terminal NPXY motif); the interaction induces the opening conformation of KRIT1 and KRIT1 and ITGB1 compete for the same binding site. Isoform 2 does not interact with ITGB1. Interacts with CDC42 (GTP- or GDP-bound form); the interaction is increased with the CDC42-membrane bound forms and prevents both CDC42 activation and cell spreading. Interacts (via C-terminal domain region) with NME2. Interacts with FERMT2 and RAC1. Interacts (via N-terminus and PTB domain) with ROCK1. Phosphorylation at Thr-38 seems to enhance integrin alpha5beta1-mediated cell adhesion. The degree of phosphorylation is regulated by integrin-dependent cell-matrix interaction. In terms of tissue distribution, expressed in the brain.

It localises to the nucleus. Its subcellular location is the cytoplasm. The protein resides in the cytoskeleton. The protein localises to the cell membrane. It is found in the cell projection. It localises to the lamellipodium. Its subcellular location is the ruffle. In terms of biological role, key regulator of the integrin-mediated cell-matrix interaction signaling by binding to the ITGB1 cytoplasmic tail and preventing the activation of integrin alpha-5/beta-1 (heterodimer of ITGA5 and ITGB1) by talin or FERMT1. Plays a role in cell proliferation, differentiation, spreading, adhesion and migration in the context of mineralization and bone development and angiogenesis. Stimulates cellular proliferation in a fibronectin-dependent manner. Involved in the regulation of beta-1 integrin-containing focal adhesion (FA) site dynamics by controlling its assembly rate during cell adhesion; inhibits beta-1 integrin clustering within FA by directly competing with talin TLN1, and hence stimulates osteoblast spreading and migration in a fibronectin- and/or collagen-dependent manner. Acts as a guanine nucleotide dissociation inhibitor (GDI) by regulating Rho family GTPases during integrin-mediated cell matrix adhesion; reduces the level of active GTP-bound form of both CDC42 and RAC1 GTPases upon cell adhesion to fibronectin. Stimulates the release of active CDC42 from the membranes to maintain it in an inactive cytoplasmic pool. Participates in the translocation of the Rho-associated protein kinase ROCK1 to membrane ruffles at cell leading edges of the cell membrane, leading to an increase of myoblast cell migration on laminin. Plays a role in bone mineralization at a late stage of osteoblast differentiation; modulates the dynamic formation of focal adhesions into fibrillar adhesions, which are adhesive structures responsible for fibronectin deposition and fibrillogenesis. Plays a role in blood vessel development; acts as a negative regulator of angiogenesis by attenuating endothelial cell proliferation and migration, lumen formation and sprouting angiogenesis by promoting AKT phosphorylation and inhibiting ERK1/2 phosphorylation through activation of the Notch signaling pathway. Promotes transcriptional activity of the MYC promoter. This Mus musculus (Mouse) protein is Integrin beta-1-binding protein 1 (Itgb1bp1).